We begin with the raw amino-acid sequence, 464 residues long: GTPase Der (464 aa).

2 consecutive EngA-type G domains span residues 5-169 and 190-368; these read PTIA…KQKG and IKVA…RESH. Residues 11–18, 58–62, 121–124, 196–203, 243–247, and 308–311 contribute to the GTP site; these read GRPNVGKS, DTGGI, NKAD, GRPNAGKS, DTAGM, and NKFD. In terms of domain architecture, KH-like spans 369-461; that stretch reads NLPTTGQLNR…PVIFSARSRV (93 aa).

The protein belongs to the TRAFAC class TrmE-Era-EngA-EngB-Septin-like GTPase superfamily. EngA (Der) GTPase family. In terms of assembly, associates with the 50S ribosomal subunit.

GTPase that plays an essential role in the late steps of ribosome biogenesis. This is GTPase Der from Akkermansia muciniphila (strain ATCC BAA-835 / DSM 22959 / JCM 33894 / BCRC 81048 / CCUG 64013 / CIP 107961 / Muc).